Here is a 325-residue protein sequence, read N- to C-terminus: NADH-quinone oxidoreductase subunit H (325 aa).

The next 8 helical transmembrane spans lie at 11–31 (ILIS…CGAF), 81–101 (AIFT…FAIV), 114–134 (IGIL…LFAG), 154–174 (LSYE…AGSF), 186–206 (VWNV…GVAV), 237–257 (FFVG…TLFF), 265–285 (LPPF…FILI), and 304–324 (VCLP…LYNA).

Belongs to the complex I subunit 1 family. NDH-1 is composed of 13 different subunits. Subunits NuoA, H, J, K, L, M, N constitute the membrane sector of the complex.

It is found in the cell inner membrane. It carries out the reaction a quinone + NADH + 5 H(+)(in) = a quinol + NAD(+) + 4 H(+)(out). Functionally, NDH-1 shuttles electrons from NADH, via FMN and iron-sulfur (Fe-S) centers, to quinones in the respiratory chain. The immediate electron acceptor for the enzyme in this species is believed to be ubiquinone. Couples the redox reaction to proton translocation (for every two electrons transferred, four hydrogen ions are translocated across the cytoplasmic membrane), and thus conserves the redox energy in a proton gradient. This subunit may bind ubiquinone. This Yersinia pseudotuberculosis serotype O:1b (strain IP 31758) protein is NADH-quinone oxidoreductase subunit H.